We begin with the raw amino-acid sequence, 188 residues long: ATP synthase subunit b (188 aa).

Residues 19 to 39 traverse the membrane as a helical segment; that stretch reads VYVLGATIVSFLILFLFITYF.

This sequence belongs to the ATPase B chain family. As to quaternary structure, F-type ATPases have 2 components, F(1) - the catalytic core - and F(0) - the membrane proton channel. F(1) has five subunits: alpha(3), beta(3), gamma(1), delta(1), epsilon(1). F(0) has three main subunits: a(1), b(2) and c(10-14). The alpha and beta chains form an alternating ring which encloses part of the gamma chain. F(1) is attached to F(0) by a central stalk formed by the gamma and epsilon chains, while a peripheral stalk is formed by the delta and b chains.

The protein localises to the cell membrane. F(1)F(0) ATP synthase produces ATP from ADP in the presence of a proton or sodium gradient. F-type ATPases consist of two structural domains, F(1) containing the extramembraneous catalytic core and F(0) containing the membrane proton channel, linked together by a central stalk and a peripheral stalk. During catalysis, ATP synthesis in the catalytic domain of F(1) is coupled via a rotary mechanism of the central stalk subunits to proton translocation. In terms of biological role, component of the F(0) channel, it forms part of the peripheral stalk, linking F(1) to F(0). The protein is ATP synthase subunit b of Mesomycoplasma hyopneumoniae (strain J / ATCC 25934 / NCTC 10110) (Mycoplasma hyopneumoniae).